The primary structure comprises 449 residues: Glucose-6-phosphate isomerase (449 aa).

Catalysis depends on glutamate 291, which acts as the Proton donor. Active-site residues include histidine 312 and lysine 426.

It belongs to the GPI family.

It is found in the cytoplasm. The enzyme catalyses alpha-D-glucose 6-phosphate = beta-D-fructose 6-phosphate. It participates in carbohydrate biosynthesis; gluconeogenesis. The protein operates within carbohydrate degradation; glycolysis; D-glyceraldehyde 3-phosphate and glycerone phosphate from D-glucose: step 2/4. Its function is as follows. Catalyzes the reversible isomerization of glucose-6-phosphate to fructose-6-phosphate. The polypeptide is Glucose-6-phosphate isomerase (Streptococcus pyogenes serotype M3 (strain ATCC BAA-595 / MGAS315)).